The following is a 345-amino-acid chain: Phosphoribosylformylglycinamidine cyclo-ligase (345 aa).

This sequence belongs to the AIR synthase family.

The protein localises to the cytoplasm. The catalysed reaction is 2-formamido-N(1)-(5-O-phospho-beta-D-ribosyl)acetamidine + ATP = 5-amino-1-(5-phospho-beta-D-ribosyl)imidazole + ADP + phosphate + H(+). The protein operates within purine metabolism; IMP biosynthesis via de novo pathway; 5-amino-1-(5-phospho-D-ribosyl)imidazole from N(2)-formyl-N(1)-(5-phospho-D-ribosyl)glycinamide: step 2/2. The chain is Phosphoribosylformylglycinamidine cyclo-ligase from Methanopyrus kandleri (strain AV19 / DSM 6324 / JCM 9639 / NBRC 100938).